Reading from the N-terminus, the 761-residue chain is Phosphoribosylformylglycinamidine synthase subunit PurL (761 aa).

Histidine 49 is a catalytic residue. ATP contacts are provided by tyrosine 52 and lysine 92. Residue glutamate 94 coordinates Mg(2+). Substrate is bound by residues 95 to 98 and arginine 117; that span reads SHNH. Residue histidine 96 is the Proton acceptor of the active site. Aspartate 118 lines the Mg(2+) pocket. Residue glutamine 241 coordinates substrate. Aspartate 269 contacts Mg(2+). 318–320 provides a ligand contact to substrate; that stretch reads ESQ. Residues asparagine 502 and glycine 539 each contribute to the ATP site. A Mg(2+)-binding site is contributed by asparagine 540. Serine 542 serves as a coordination point for substrate.

This sequence belongs to the FGAMS family. Monomer. Part of the FGAM synthase complex composed of 1 PurL, 1 PurQ and 2 PurS subunits.

The protein resides in the cytoplasm. The catalysed reaction is N(2)-formyl-N(1)-(5-phospho-beta-D-ribosyl)glycinamide + L-glutamine + ATP + H2O = 2-formamido-N(1)-(5-O-phospho-beta-D-ribosyl)acetamidine + L-glutamate + ADP + phosphate + H(+). The protein operates within purine metabolism; IMP biosynthesis via de novo pathway; 5-amino-1-(5-phospho-D-ribosyl)imidazole from N(2)-formyl-N(1)-(5-phospho-D-ribosyl)glycinamide: step 1/2. Its function is as follows. Part of the phosphoribosylformylglycinamidine synthase complex involved in the purines biosynthetic pathway. Catalyzes the ATP-dependent conversion of formylglycinamide ribonucleotide (FGAR) and glutamine to yield formylglycinamidine ribonucleotide (FGAM) and glutamate. The FGAM synthase complex is composed of three subunits. PurQ produces an ammonia molecule by converting glutamine to glutamate. PurL transfers the ammonia molecule to FGAR to form FGAM in an ATP-dependent manner. PurS interacts with PurQ and PurL and is thought to assist in the transfer of the ammonia molecule from PurQ to PurL. This chain is Phosphoribosylformylglycinamidine synthase subunit PurL, found in Chlorobium chlorochromatii (strain CaD3).